The primary structure comprises 131 residues: D-ribose pyranase (131 aa).

Histidine 20 acts as the Proton donor in catalysis. Substrate-binding positions include aspartate 28, histidine 98, and 120–122; that span reads YAN.

Belongs to the RbsD / FucU family. RbsD subfamily. In terms of assembly, homodecamer.

Its subcellular location is the cytoplasm. It carries out the reaction beta-D-ribopyranose = beta-D-ribofuranose. It functions in the pathway carbohydrate metabolism; D-ribose degradation; D-ribose 5-phosphate from beta-D-ribopyranose: step 1/2. In terms of biological role, catalyzes the interconversion of beta-pyran and beta-furan forms of D-ribose. This chain is D-ribose pyranase, found in Chloroflexus aggregans (strain MD-66 / DSM 9485).